Consider the following 310-residue polypeptide: Major allergen Asp f 2 (310 aa).

The first 16 residues, 1–16 (MAALLRLAVLLPLAAP), serve as a signal peptide directing secretion. N-linked (GlcNAc...) asparagine glycosylation is found at Asn57, Asn87, Asn143, and Asn216. The interval 247–310 (AGESHGPDQG…THEGGQLHCT (64 aa)) is disordered. Residues 258–292 (DTGSASAPASTSTSSSSSGSGSGATTTPTDSPSAT) are compositionally biased toward low complexity. Basic and acidic residues predominate over residues 300–310 (HTHEGGQLHCT).

The protein belongs to the ZPS1 family.

Its subcellular location is the secreted. The sequence is that of Major allergen Asp f 2 from Aspergillus fumigatus (strain ATCC MYA-4609 / CBS 101355 / FGSC A1100 / Af293) (Neosartorya fumigata).